A 112-amino-acid polypeptide reads, in one-letter code: DNA-binding protein PF1087 (112 aa).

Belongs to the PDCD5 family.

The chain is DNA-binding protein PF1087 from Pyrococcus furiosus (strain ATCC 43587 / DSM 3638 / JCM 8422 / Vc1).